The primary structure comprises 235 residues: MFQLGSLVVLCGLLIGTSESLLGDVANAVNNLDILNSPSEAVAQNLNLDVGSLQQATTWPSAKDSILETLNKVELGNSNGFTPLNGLLLRVNKFRVLDLQAGLSSNGKDIDLKLPLVFEISFSLPVIGPTLDVAVSLDLLNSVSVQTNAQTGLPGVTLGKCSGNTDKISISLLGRRLPFVNRILDGVSGLLTGAVSILLQNILCPVLQYLLSTMSGSAIQGLLSNVLTGQLAVPL.

Residues 1 to 20 form the signal peptide; that stretch reads MFQLGSLVVLCGLLIGTSES. C161 and C204 are joined by a disulfide.

Belongs to the BPI/LBP/Plunc superfamily. Plunc family. In terms of tissue distribution, expressed in parotid, submandibular and sublingual glands.

It localises to the secreted. In terms of biological role, has strong antibacterial activity against P.aeruginosa. This Rattus norvegicus (Rat) protein is BPI fold-containing family A member 2 (Bpifa2).